A 398-amino-acid polypeptide reads, in one-letter code: Type II secretion system protein L (398 aa).

Residues 1–248 (MNNHHTSSAA…RQPTPRRWRP (248 aa)) lie on the Cytoplasmic side of the membrane. A helical transmembrane segment spans residues 249 to 265 (VIVAALALLLLWSSNCL). At 266-398 (HDHLMLGQQA…GRLTLEGNDA (133 aa)) the chain is on the periplasmic side.

It belongs to the GSP L family. As to quaternary structure, type II secretion system is composed of four main components: the outer membrane complex, the inner membrane complex, the cytoplasmic secretion ATPase and the periplasm-spanning pseudopilus. Forms homodimers. Interacts with PulM/GspM. Interacts with PulE/GspE and PulF/GspF.

The protein resides in the cell inner membrane. Inner membrane component of the type II secretion system required for the energy-dependent secretion of extracellular factors such as proteases and toxins from the periplasm. Plays a role in the complex assembly and recruits PulM resulting in a stable complex in the inner membrane. Provides thus a link between the energy-providing PulE protein in the cytoplasm and the rest of the T2SS machinery. The protein is Type II secretion system protein L (pulL) of Klebsiella pneumoniae.